Consider the following 288-residue polypeptide: ATP synthase gamma chain (288 aa).

The protein belongs to the ATPase gamma chain family. In terms of assembly, F-type ATPases have 2 components, CF(1) - the catalytic core - and CF(0) - the membrane proton channel. CF(1) has five subunits: alpha(3), beta(3), gamma(1), delta(1), epsilon(1). CF(0) has three main subunits: a, b and c.

It is found in the cell inner membrane. Functionally, produces ATP from ADP in the presence of a proton gradient across the membrane. The gamma chain is believed to be important in regulating ATPase activity and the flow of protons through the CF(0) complex. This is ATP synthase gamma chain from Rickettsia akari (strain Hartford).